The chain runs to 104 residues: Large ribosomal subunit protein bL21 (104 aa).

It belongs to the bacterial ribosomal protein bL21 family. Part of the 50S ribosomal subunit. Contacts protein L20.

In terms of biological role, this protein binds to 23S rRNA in the presence of protein L20. This chain is Large ribosomal subunit protein bL21, found in Helicobacter pylori (strain P12).